The primary structure comprises 1104 residues: Mitogen-activated protein kinase kinase kinase 9 (1104 aa).

Residues 12–22 (ASAAAAAPPGE) show a composition bias toward low complexity. The tract at residues 12–47 (ASAAAAAPPGEDGAGAGAEEEEEEEEEAAAAVGPGE) is disordered. Residues 29-39 (AEEEEEEEEEA) are compositionally biased toward acidic residues. Positions 52-116 (APLPYWTAVF…PSNYVTPRSA (65 aa)) constitute an SH3 domain. The 269-residue stretch at 144–412 (LTLEEIIGIG…LTTIEESGFF (269 aa)) folds into the Protein kinase domain. Residues 150-158 (IGIGGFGKV) and K171 each bind ATP. The Proton acceptor role is filled by D268. 2 positions are modified to phosphothreonine; by autocatalysis: T304 and T305. At S308 the chain carries Phosphoserine; by autocatalysis. T312 is modified (phosphothreonine; by autocatalysis). Leucine-zipper regions lie at residues 430 to 451 (IQEM…EEEL) and 465 to 486 (LRRR…ELNI). Disordered stretches follow at residues 532-636 (ASPT…PHFH), 675-742 (MEDE…LKRG), 781-819 (EEPE…FKKE), and 890-1038 (RDPN…CFAS). The residue at position 533 (S533) is a Phosphoserine. 2 stretches are compositionally biased toward polar residues: residues 566–575 (PGESSKTWGR) and 723–739 (PVNS…TNSL). Residues 785–797 (PPAREEKKRREGL) are compositionally biased toward basic and acidic residues. Polar residues predominate over residues 893–910 (NQSLTPTHVTLTTPSQPS). Positions 929-944 (SRSPSSNGLSPSPGAG) are enriched in low complexity. The segment covering 1014-1038 (HARSTSPANSSSTETPSNLDSCFAS) has biased composition (polar residues).

The protein belongs to the protein kinase superfamily. STE Ser/Thr protein kinase family. MAP kinase kinase kinase subfamily. In terms of assembly, homodimer. Mg(2+) serves as cofactor. Autophosphorylation on serine and threonine residues within the activation loop plays a role in enzyme activation. Thr-312 is likely to be the main autophosphorylation site. Autophosphorylation also occurs on Thr-304 and Ser-308. Expressed in epithelial tumor cell lines of colonic, breast and esophageal origin.

The catalysed reaction is L-seryl-[protein] + ATP = O-phospho-L-seryl-[protein] + ADP + H(+). The enzyme catalyses L-threonyl-[protein] + ATP = O-phospho-L-threonyl-[protein] + ADP + H(+). With respect to regulation, homodimerization via the leucine zipper domains is required for autophosphorylation of multiple sites in the activation loop and subsequent activation. Autophosphorylation at Thr-312 is the key step in activation of MAP3K9/MLK1 and is required for full phosphorylation. Autophosphorylation at Thr-304 and Ser-308 have been shown to be of secondary importance in the activation of MAP3K9/MLK1. CEP-1347 and many indolocarbazole analogs have been shown to act as inhibitors of MAP3K9/MLK1 activity. In terms of biological role, serine/threonine kinase which acts as an essential component of the MAP kinase signal transduction pathway. Plays an important role in the cascades of cellular responses evoked by changes in the environment. Once activated, acts as an upstream activator of the MKK/JNK signal transduction cascade through the phosphorylation of MAP2K4/MKK4 and MAP2K7/MKK7 which in turn activate the JNKs. The MKK/JNK signaling pathway regulates stress response via activator protein-1 (JUN) and GATA4 transcription factors. Also plays a role in mitochondrial death signaling pathway, including the release cytochrome c, leading to apoptosis. In Homo sapiens (Human), this protein is Mitogen-activated protein kinase kinase kinase 9 (MAP3K9).